Here is a 443-residue protein sequence, read N- to C-terminus: uncharacterized protein (443 aa).

This is an uncharacterized protein from Saccharomyces cerevisiae (strain ATCC 204508 / S288c) (Baker's yeast).